A 490-amino-acid polypeptide reads, in one-letter code: Glutamate--tRNA ligase (490 aa).

The 'HIGH' region signature appears at 12-22 (PSPTGTPHVGL). A 'KMSKS' region motif is present at residues 256–260 (KLSKR). Lys259 serves as a coordination point for ATP.

Belongs to the class-I aminoacyl-tRNA synthetase family. Glutamate--tRNA ligase type 1 subfamily. In terms of assembly, monomer.

Its subcellular location is the cytoplasm. It carries out the reaction tRNA(Glu) + L-glutamate + ATP = L-glutamyl-tRNA(Glu) + AMP + diphosphate. Functionally, catalyzes the attachment of glutamate to tRNA(Glu) in a two-step reaction: glutamate is first activated by ATP to form Glu-AMP and then transferred to the acceptor end of tRNA(Glu). In Mycobacterium sp. (strain JLS), this protein is Glutamate--tRNA ligase.